Here is a 1252-residue protein sequence, read N- to C-terminus: Nephrin (1252 aa).

An N-terminal signal peptide occupies residues 1–35; that stretch reads MGAKRVTVRGARTSPIHRMSSLTPLLLMGMLTSGL. Residues 36–1078 lie on the Extracellular side of the membrane; that stretch reads AESPVPTSAP…PGPPRLPLLP (1043 aa). Ig-like C2-type domains are found at residues 39–144, 149–247, 256–347, 354–448, 454–554, and 558–649; these read PVPT…VILS, PKVL…ASFT, PPVI…RSIT, PSAI…KSLT, PAQK…TQLV, and PPTN…ETVS. N-linked (GlcNAc...) asparagine glycosylation is present at N54. Intrachain disulfides connect C67–C125, C174–C231, and C279–C331. N370 carries an N-linked (GlcNAc...) asparagine glycan. An intrachain disulfide couples C375 to C431. S446 carries the phosphoserine modification. C479 and C542 form a disulfide bridge. 4 N-linked (GlcNAc...) asparagine glycosylation sites follow: N561, N578, N591, and N722. C581 and C637 are joined by a disulfide. 2 Ig-like C2-type domains span residues 754-846 and 852-953; these read PTIR…LVRL and PQVD…VSIS. 2 cysteine pairs are disulfide-bonded: C775–C830 and C877–C934. The Fibronectin type-III domain maps to 957 to 1052; that stretch reads PPLGLKVVSI…IQVSVTTPGP (96 aa). The interval 1043–1067 is disordered; the sequence is IQVSVTTPGPDQAPEDTDHQLPTEL. Residues 1079–1099 form a helical membrane-spanning segment; sequence VLFAVGGLLLLSNASCVGGLL. Topologically, residues 1100–1252 are cytoplasmic; that stretch reads WRRRLRRLAE…LPFELRGHLV (153 aa). S1112 bears the Phosphoserine mark. The span at 1113 to 1127 shows a compositional bias: basic and acidic residues; it reads EKTEAGSEDRIRNEY. A disordered region spans residues 1113 to 1144; the sequence is EKTEAGSEDRIRNEYEESQWTGDRDTRSSTVS. Phosphothreonine is present on T1115. Position 1119 is a phosphoserine (S1119). Phosphotyrosine; by FYN is present on Y1204.

This sequence belongs to the immunoglobulin superfamily. In terms of assembly, interacts with NPHS2 and with CD2AP (via C-terminal domain). Self-associates (via the Ig-like domains). Also interacts (via the Ig-like domains) with KIRREL1/NEPH1 and KIRREL2; the interaction with KIRREL1 is dependent on KIRREL1 glycosylation. Interacts with KIRREL3. Interacts with MAGI1 (via PDZ 2 and 3 domains) forming a tripartite complex with IGSF5/JAM4. Interacts with DDN; the interaction is direct. Forms a complex with ACTN4, CASK, IQGAP1, MAGI2, SPTAN1 and SPTBN1. Interacts with phosphatidylinositol 3-kinase regulatory subunit PIK3R1; the interaction is reduced by high glucose levels. Phosphorylated at Tyr-1204 by FYN, leading to the recruitment and activation of phospholipase C-gamma-1/PLCG1. Tyrosine phosphorylation is reduced by high glucose levels. Dephosphorylated by tensin TNS2 which leads to reduced binding of NPHN1 to PIK3R1. In terms of tissue distribution, strongly expressed in the podocytes of kidney glomeruli (at protein level) and at lower levels in the spleen.

The protein resides in the cell membrane. In terms of biological role, seems to play a role in the development or function of the kidney glomerular filtration barrier. Regulates glomerular vascular permeability. May anchor the podocyte slit diaphragm to the actin cytoskeleton. Plays a role in skeletal muscle formation through regulation of myoblast fusion. The protein is Nephrin (Nphs1) of Rattus norvegicus (Rat).